A 38-amino-acid polypeptide reads, in one-letter code: Photosystem II reaction center protein X 2 (38 aa).

Residues 8 to 28 form a helical membrane-spanning segment; that stretch reads FLWSLVYGAVVLGLLFGAIVF.

The protein belongs to the PsbX family. Type 1 subfamily. As to quaternary structure, PSII is composed of 1 copy each of membrane proteins PsbA, PsbB, PsbC, PsbD, PsbE, PsbF, PsbH, PsbI, PsbJ, PsbK, PsbL, PsbM, PsbT, PsbX, PsbY, PsbZ, Psb30/Ycf12, peripheral proteins PsbO, CyanoQ (PsbQ), PsbU, PsbV and a large number of cofactors. It forms dimeric complexes.

The protein localises to the cellular thylakoid membrane. In terms of biological role, involved in the binding and/or turnover of quinones at the Q(B) site of photosystem II (PSII). PSII is a light-driven water plastoquinone oxidoreductase, using light energy to abstract electrons from H(2)O, generating a proton gradient subsequently used for ATP formation. This chain is Photosystem II reaction center protein X 2, found in Synechococcus sp. (strain JA-3-3Ab) (Cyanobacteria bacterium Yellowstone A-Prime).